The primary structure comprises 498 residues: Succinate-semialdehyde dehydrogenase [NADP(+)] 1 (498 aa).

Gly-247–Gly-252 serves as a coordination point for NAD(+). Catalysis depends on residues Glu-269 and Cys-303.

This sequence belongs to the aldehyde dehydrogenase family. As to quaternary structure, homotetramer.

Its subcellular location is the cytoplasm. The catalysed reaction is succinate semialdehyde + NAD(+) + H2O = succinate + NADH + 2 H(+). It carries out the reaction succinate semialdehyde + NADP(+) + H2O = succinate + NADPH + 2 H(+). It participates in amino-acid degradation; 4-aminobutanoate degradation. In terms of biological role, catalyzes the oxidation of succinate semialdehyde to succinate. Can utilize both NAD(+) or NADP(+) as a coenzyme. Functions in a gamma-aminobutyrate (GABA) degradation pathway that allows growth utilizing GABA as a nitrogen source. Functions in the GABA shunt, which allows to bypass 2 reactions in the TCA cycle by removing alpha-ketoglutarate from the cycle and feeding succinate and NADH back into the cycle. This chain is Succinate-semialdehyde dehydrogenase [NADP(+)] 1 (ssd1), found in Schizosaccharomyces pombe (strain 972 / ATCC 24843) (Fission yeast).